The primary structure comprises 477 residues: Beta-agarase D (477 aa).

The first 20 residues, 1-20 (MKRSILLAIIAFLQFFTSYG), serve as a signal peptide directing secretion. The 357-residue stretch at 22–378 (YDWDNVPIPA…WIRVYKPVNA (357 aa)) folds into the GH16 domain. Substrate contacts are provided by residues 94–104 (MQNHVAVSGGN), 123–125 (NNT), Glu174, Glu179, Arg206, and Glu340. The active-site Nucleophile is the Glu174. The active-site Proton donor is the Glu179. Positions 382 to 391 (NSAETTSTVE) are enriched in low complexity. The disordered stretch occupies residues 382–402 (NSAETTSTVEKPASFEPQGQP).

It belongs to the glycosyl hydrolase 16 family.

The protein localises to the secreted. The enzyme catalyses Hydrolysis of (1-&gt;4)-beta-D-galactosidic linkages in agarose, giving the tetramer as the predominant product.. Functionally, cleaves the beta-1,4-linkages between beta-D-galactose and alpha-L-3,6-anhydro-galactose residues in agarose. Cleaves agarose in a random manner with retention of the anomeric-bond configuration, producing beta-anomers that give rise progressively to alpha-anomers when mutarotation takes place. Requires at least 4 consecutive agarose units and is highly intolerant to modifications. The sequence is that of Beta-agarase D (agaD) from Zobellia galactanivorans (strain DSM 12802 / CCUG 47099 / CIP 106680 / NCIMB 13871 / Dsij).